Consider the following 130-residue polypeptide: Large ribosomal subunit protein eL32 (130 aa).

This sequence belongs to the eukaryotic ribosomal protein eL32 family. As to quaternary structure, part of the 50S ribosomal subunit.

The polypeptide is Large ribosomal subunit protein eL32 (Pyrococcus furiosus (strain ATCC 43587 / DSM 3638 / JCM 8422 / Vc1)).